The following is a 326-amino-acid chain: N-acetyl-gamma-glutamyl-phosphate reductase (326 aa).

Residue Cys-155 is part of the active site.

It belongs to the NAGSA dehydrogenase family. Type 1 subfamily.

It localises to the cytoplasm. The catalysed reaction is N-acetyl-L-glutamate 5-semialdehyde + phosphate + NADP(+) = N-acetyl-L-glutamyl 5-phosphate + NADPH + H(+). The protein operates within amino-acid biosynthesis; L-arginine biosynthesis; N(2)-acetyl-L-ornithine from L-glutamate: step 3/4. In terms of biological role, catalyzes the NADPH-dependent reduction of N-acetyl-5-glutamyl phosphate to yield N-acetyl-L-glutamate 5-semialdehyde. This chain is N-acetyl-gamma-glutamyl-phosphate reductase, found in Shewanella baltica (strain OS195).